The following is a 447-amino-acid chain: uncharacterized protein (447 aa).

Disordered stretches follow at residues 1 to 80, 115 to 184, and 295 to 322; these read MTFE…EQSS, ATTQ…PNNP, and LQDN…SSGI. Basic and acidic residues predominate over residues 11 to 32; sequence QRRDESAYRLGEEDGRQKGESS. Positions 42-51 are enriched in polar residues; it reads KNPSNVSFWS. Residues 61–72 show a composition bias toward basic and acidic residues; that stretch reads VKTDRPQFHRAD. Positions 115–158 are enriched in polar residues; it reads ATTQSSPISTSFNPQLPSNSNTNRFDFGSESQLSSNYTNDTGLS. Residues 300–321 show a composition bias toward low complexity; the sequence is SLTSQGSNLSSQNSGLSSSSSG. 2 consecutive transmembrane segments (helical) span residues 385–405 and 424–444; these read FMFL…ASFL and IINR…IGLG.

Its subcellular location is the membrane. This is an uncharacterized protein from Schizosaccharomyces pombe (strain 972 / ATCC 24843) (Fission yeast).